The chain runs to 585 residues: Conglutin alpha 3 (585 aa).

Residues 1-23 (MANPFLLSLSLCLVLLYTSACLG) form the signal peptide. 2 cysteine pairs are disulfide-bonded: C32–C65 and C108–C406. The Cupin type-1 1 domain maps to 37-258 (LNALEPDNRI…ALNIDEDTVH (222 aa)). 3 disordered regions span residues 113–147 (EEAQ…HFRE), 199–240 (EEYP…ILSG), and 283–402 (KWQE…NGLE). Residues 136–147 (EDSHQKIRHFRE) show a composition bias toward basic and acidic residues. Positions 211–224 (RQQHQRPSGRRHGQ) are enriched in basic residues. A compositionally biased stretch (acidic residues) spans 309–320 (REEEEKEEEDEP). A compositionally biased stretch (basic and acidic residues) spans 338–350 (ERGRGRGGSEWKR). The 147-residue stretch at 412 to 558 (ENIADPTRAD…AFRLSLNQVS (147 aa)) folds into the Cupin type-1 2 domain. Over residues 565 to 579 (NHNPLVTPQSQSQDH) the composition is skewed to polar residues. Residues 565–585 (NHNPLVTPQSQSQDHNLVKVA) form a disordered region.

The protein belongs to the 11S seed storage protein (globulins) family. As to quaternary structure, hexamer; each subunit is composed of an acidic and a basic chain derived from a single precursor and linked by a disulfide bond. Component of globulins complexes which accumulate in seeds.

Its function is as follows. Sulfur-rich seed storage protein. This protein found in the seeds of many leguminous and non-leguminous plants is the source of sulfur-containing amino acids in seed meals. This Lupinus angustifolius (Narrow-leaved blue lupine) protein is Conglutin alpha 3.